The chain runs to 340 residues: Guanine nucleotide-binding protein subunit beta-1 (340 aa).

Residue S29 is modified to Phosphoserine. WD repeat units lie at residues 53-92 (GHLA…KVHA), 95-134 (LRSS…GNVR), 141-179 (GHGG…QVTS), 182-221 (GHTG…CKQT), 224-263 (GHES…ELAM), 268-307 (NIIC…RSGI), and 310-340 (GHDN…RVWN).

Belongs to the WD repeat G protein beta family. As to quaternary structure, g proteins are composed of 3 units, alpha, beta and gamma. As to expression, expressed in the brain neuropil and cortex, and the thoracic ganglion (at protein level). Expression detected in eye at protein level but not at mRNA level, suggesting cross reactivity of antibodies to the similar Gbeta76C protein.

Guanine nucleotide-binding proteins (G proteins) are involved as a modulator or transducer in various transmembrane signaling systems. The beta and gamma chains are required for the GTPase activity, for replacement of GDP by GTP, and for G protein-effector interaction. The protein is Guanine nucleotide-binding protein subunit beta-1 (Gbeta13F) of Drosophila melanogaster (Fruit fly).